Here is a 294-residue protein sequence, read N- to C-terminus: Protein RarD (294 aa).

At 1–11 (MDAKQTRQGVL) the chain is on the cytoplasmic side. A helical membrane pass occupies residues 12–34 (LALAAYFIWGIAPAYFKLIYYVP). In terms of domain architecture, EamA spans 18–145 (FIWGIAPAYF…AVCGVLVQLW (128 aa)). The Periplasmic segment spans residues 35 to 37 (ADE). The helical transmembrane segment at 38 to 60 (ILTHRVIWSFFFMVALLSVSRQW) threads the bilayer. Over 61 to 72 (RQVKRLLKTPKK) the chain is Cytoplasmic. A helical membrane pass occupies residues 73–95 (IFLLALSAVLVGGNWLLFIWAVN). The Periplasmic segment spans residues 96–99 (NHHM). A helical membrane pass occupies residues 100-122 (LEASLGYFINPLVNILLGMIFLG). Residues 123-128 (ERFRRM) lie on the Cytoplasmic side of the membrane. Residues 129–146 (QWLAVILAVCGVLVQLWT) traverse the membrane as a helical segment. Topologically, residues 147 to 149 (FGS) are periplasmic. The chain crosses the membrane as a helical span at residues 150 to 167 (LPIIALGLAFSFAFYGLV). At 168-179 (RKKIAVEAQTGM) the chain is on the cytoplasmic side. A helical membrane pass occupies residues 180-197 (LVETLWLLPVAAIYLFGI). At 198 to 211 (ADSPTSHMGQNALS) the chain is on the periplasmic side. Residues 212 to 234 (LNLLLMAAGVVTTIPLLCFTGAA) form a helical membrane-spanning segment. The Cytoplasmic portion of the chain corresponds to 235–238 (TRLR). The chain crosses the membrane as a helical span at residues 239–261 (LSTLGFFQYIGPTLMFLLAVTFY). Residues 262-270 (GEVPGADKM) are Periplasmic-facing. A helical membrane pass occupies residues 271 to 290 (VTFAFIWVALAIFVMDAIYT). Residues 291 to 294 (QRKK) are Cytoplasmic-facing.

Belongs to the EamA transporter family.

It localises to the cell inner membrane. In Salmonella typhimurium (strain LT2 / SGSC1412 / ATCC 700720), this protein is Protein RarD (rarD).